The chain runs to 65 residues: Large ribosomal subunit protein uL29 (65 aa).

The protein belongs to the universal ribosomal protein uL29 family.

This Buchnera aphidicola subsp. Cinara cedri (strain Cc) protein is Large ribosomal subunit protein uL29.